The sequence spans 312 residues: L-lactate dehydrogenase (312 aa).

NAD(+) is bound by residues V11, D32, R37, and G76–A77. Substrate contacts are provided by residues Q79, R85, and N117–D120. NAD(+) is bound by residues V115–N117 and T140. D145–R148 lines the substrate pocket. Residues R150 and H165 each coordinate beta-D-fructose 1,6-bisphosphate. H172 (proton acceptor) is an active-site residue. Y217 is subject to Phosphotyrosine. T226 serves as a coordination point for substrate.

The protein belongs to the LDH/MDH superfamily. LDH family. As to quaternary structure, homotetramer.

It localises to the cytoplasm. It catalyses the reaction (S)-lactate + NAD(+) = pyruvate + NADH + H(+). The protein operates within fermentation; pyruvate fermentation to lactate; (S)-lactate from pyruvate: step 1/1. Its activity is regulated as follows. Allosterically activated by fructose 1,6-bisphosphate (FBP). Catalyzes the conversion of lactate to pyruvate. This chain is L-lactate dehydrogenase, found in Pseudothermotoga lettingae (strain ATCC BAA-301 / DSM 14385 / NBRC 107922 / TMO) (Thermotoga lettingae).